We begin with the raw amino-acid sequence, 280 residues long: Putative pyruvate, phosphate dikinase regulatory protein (280 aa).

ADP is bound at residue 158–165 (GVSRTSKT).

This sequence belongs to the pyruvate, phosphate/water dikinase regulatory protein family. PDRP subfamily.

The enzyme catalyses N(tele)-phospho-L-histidyl/L-threonyl-[pyruvate, phosphate dikinase] + ADP = N(tele)-phospho-L-histidyl/O-phospho-L-threonyl-[pyruvate, phosphate dikinase] + AMP + H(+). The catalysed reaction is N(tele)-phospho-L-histidyl/O-phospho-L-threonyl-[pyruvate, phosphate dikinase] + phosphate + H(+) = N(tele)-phospho-L-histidyl/L-threonyl-[pyruvate, phosphate dikinase] + diphosphate. In terms of biological role, bifunctional serine/threonine kinase and phosphorylase involved in the regulation of the pyruvate, phosphate dikinase (PPDK) by catalyzing its phosphorylation/dephosphorylation. This chain is Putative pyruvate, phosphate dikinase regulatory protein, found in Lactobacillus johnsonii (strain CNCM I-12250 / La1 / NCC 533).